A 342-amino-acid polypeptide reads, in one-letter code: Tetraacyldisaccharide 4'-kinase (342 aa).

Residue 68 to 75 (TVGGTGKT) coordinates ATP.

This sequence belongs to the LpxK family.

The catalysed reaction is a lipid A disaccharide + ATP = a lipid IVA + ADP + H(+). The protein operates within glycolipid biosynthesis; lipid IV(A) biosynthesis; lipid IV(A) from (3R)-3-hydroxytetradecanoyl-[acyl-carrier-protein] and UDP-N-acetyl-alpha-D-glucosamine: step 6/6. Transfers the gamma-phosphate of ATP to the 4'-position of a tetraacyldisaccharide 1-phosphate intermediate (termed DS-1-P) to form tetraacyldisaccharide 1,4'-bis-phosphate (lipid IVA). This is Tetraacyldisaccharide 4'-kinase from Burkholderia cenocepacia (strain ATCC BAA-245 / DSM 16553 / LMG 16656 / NCTC 13227 / J2315 / CF5610) (Burkholderia cepacia (strain J2315)).